The primary structure comprises 367 residues: GTP cyclohydrolase FolE2 (367 aa).

This sequence belongs to the GTP cyclohydrolase IV family.

It catalyses the reaction GTP + H2O = 7,8-dihydroneopterin 3'-triphosphate + formate + H(+). The protein operates within cofactor biosynthesis; 7,8-dihydroneopterin triphosphate biosynthesis; 7,8-dihydroneopterin triphosphate from GTP: step 1/1. In terms of biological role, converts GTP to 7,8-dihydroneopterin triphosphate. This chain is GTP cyclohydrolase FolE2, found in Ruegeria sp. (strain TM1040) (Silicibacter sp.).